The following is a 529-amino-acid chain: MSHNQNQPHRPVPVHVTNAEPNPNPNNLPNFLLSVRLKYVKLGYHYLISNALYILLLPLLAATIANLSSFTINDLSLLYNTLRFHFLSATLATALLISLSTAYFTTRPRRVFLLDFSCYKPDPSLICTRETFMDRSQRVGIFTEDNLAFQQKILERSGLGQKTYFPEALLRVPPNPCMEEARKEAETVMFGAIDAVLEKTGVKPKDIGILVVNCSLFNPTPSLSAMIVNKYKLRGNILSYNLGGMGCSAGLISIDLAKQMLQVQPNSYALVVSTENITLNWYLGNDRSMLLSNCIFRMGGAAVLLSNRSSDRSRSKYQLIHTVRTHKGADDNAFGCVYQREDNNAEETGKIGVSLSKNLMAIAGEALKTNITTLGPLVLPMSEQLLFFATLVARKVFKVKKIKPYIPDFKLAFEHFCIHAGGRAVLDEIEKNLDLSEWHMEPSRMTLNRFGNTSSSSLWYELAYSEAKGRIKRGDRTWQIAFGSGFKCNSAVWKALRTIDPMDEKTNPWIDEIDDFPVQVPRITPITSS.

Positions 1 to 22 are disordered; the sequence is MSHNQNQPHRPVPVHVTNAEPN. The next 2 membrane-spanning stretches (helical) occupy residues 52–72 and 84–104; these read LYILLLPLLAATIANLSSFTI and FHFLSATLATALLISLSTAYF. Residues 103–396 enclose the FAE domain; sequence YFTTRPRRVF…FFATLVARKV (294 aa). Catalysis depends on residues Cys247, His326, His415, His419, and Asn452.

Belongs to the thiolase-like superfamily. Chalcone/stilbene synthases family. In terms of tissue distribution, expressed in aerial organs. Expressed in leaves, flowers, siliques and stems. Expressed in roots, young seedlings, leaves, flowers and siliques.

It localises to the membrane. The catalysed reaction is a very-long-chain acyl-CoA + malonyl-CoA + H(+) = a very-long-chain 3-oxoacyl-CoA + CO2 + CoA. It functions in the pathway lipid metabolism; fatty acid biosynthesis. With respect to regulation, inhibited by K3 herbicides such as alachlor, allidochlor, anilofos, cafenstrole, fentrazamide and flufenacet. Strongly inhibited by metazachlor and only slightly by mefluidide. Its function is as follows. Mediates the synthesis of VLCFAs from 22 to 26 carbons in length (e.g. C22, C24, C26). Functionally redundant with KCS2 in the two-carbon elongation of C22 fatty acids that is required for cuticular wax and root suberin biosynthesis. The polypeptide is 3-ketoacyl-CoA synthase 20 (Arabidopsis thaliana (Mouse-ear cress)).